Here is a 372-residue protein sequence, read N- to C-terminus: Bifunctional coenzyme PQQ synthesis protein C/D (372 aa).

Residues 1–267 (MTAQFPPPVP…VAETNSAEDS (267 aa)) form a pqqC region. The interval 260–288 (ETNSAEDSPAAAASPAATTAEPTAFSGSD) is disordered. Low complexity predominate over residues 264–283 (AEDSPAAAASPAATTAEPTA). A linker region spans residues 268 to 280 (PAAAASPAATTAE). The segment at 281–372 (PTAFSGSDVP…GLAQKRVLER (92 aa)) is pqqD.

It in the N-terminal section; belongs to the PqqC family. This sequence in the C-terminal section; belongs to the PqqD family. As to quaternary structure, monomer. Interacts with PqqE.

It catalyses the reaction 6-(2-amino-2-carboxyethyl)-7,8-dioxo-1,2,3,4,7,8-hexahydroquinoline-2,4-dicarboxylate + 3 O2 = pyrroloquinoline quinone + 2 H2O2 + 2 H2O + H(+). It participates in cofactor biosynthesis; pyrroloquinoline quinone biosynthesis. The PqqC region is involved in ring cyclization and eight-electron oxidation of 3a-(2-amino-2-carboxyethyl)-4,5-dioxo-4,5,6,7,8,9-hexahydroquinoline-7,9-dicarboxylic-acid to PQQ. Its function is as follows. The PqqD region functions as a PqqA binding domain and presents PqqA to PqqE. The protein is Bifunctional coenzyme PQQ synthesis protein C/D (pqqCD) of Methylorubrum extorquens (strain ATCC 14718 / DSM 1338 / JCM 2805 / NCIMB 9133 / AM1) (Methylobacterium extorquens).